Here is a 602-residue protein sequence, read N- to C-terminus: Probable translation initiation factor IF-2 (602 aa).

Residues 15–230 (LRTPIVAVLG…VLMGLSQRYL (216 aa)) form the tr-type G domain. The interval 24–31 (GHVDHGKT) is G1. GTP is bound at residue 24 to 31 (GHVDHGKT). The G2 stretch occupies residues 49–53 (AITQH). The segment at 86–89 (DTPG) is G3. Residues 86 to 90 (DTPGH) and 140 to 143 (NKID) each bind GTP. The G4 stretch occupies residues 140-143 (NKID). A G5 region spans residues 208 to 210 (SAE).

This sequence belongs to the TRAFAC class translation factor GTPase superfamily. Classic translation factor GTPase family. IF-2 subfamily.

Function in general translation initiation by promoting the binding of the formylmethionine-tRNA to ribosomes. Seems to function along with eIF-2. This Natronomonas pharaonis (strain ATCC 35678 / DSM 2160 / CIP 103997 / JCM 8858 / NBRC 14720 / NCIMB 2260 / Gabara) (Halobacterium pharaonis) protein is Probable translation initiation factor IF-2.